A 242-amino-acid polypeptide reads, in one-letter code: Protein LST7 (242 aa).

Residues Ser-48–Val-212 enclose the uDENN FLCN/SMCR8-type domain.

Required for the nitrogen-regulated transport of amino acid permeases GAP1 and PUT4 from the Golgi to the cell surface. The chain is Protein LST7 (LST7) from Saccharomyces cerevisiae (strain ATCC 204508 / S288c) (Baker's yeast).